Reading from the N-terminus, the 247-residue chain is Carboxy-S-adenosyl-L-methionine synthase (247 aa).

Residues Tyr39, 64–66 (GCS), 89–90 (DN), 117–118 (DI), Asn132, and Arg199 each bind S-adenosyl-L-methionine.

The protein belongs to the class I-like SAM-binding methyltransferase superfamily. Cx-SAM synthase family. Homodimer.

It carries out the reaction prephenate + S-adenosyl-L-methionine = carboxy-S-adenosyl-L-methionine + 3-phenylpyruvate + H2O. Catalyzes the conversion of S-adenosyl-L-methionine (SAM) to carboxy-S-adenosyl-L-methionine (Cx-SAM). The sequence is that of Carboxy-S-adenosyl-L-methionine synthase from Salmonella arizonae (strain ATCC BAA-731 / CDC346-86 / RSK2980).